The primary structure comprises 433 residues: Glutamate-1-semialdehyde 2,1-aminomutase (433 aa).

Lys-271 bears the N6-(pyridoxal phosphate)lysine mark.

This sequence belongs to the class-III pyridoxal-phosphate-dependent aminotransferase family. HemL subfamily. In terms of assembly, homodimer. Pyridoxal 5'-phosphate serves as cofactor.

The protein localises to the cytoplasm. The catalysed reaction is (S)-4-amino-5-oxopentanoate = 5-aminolevulinate. The protein operates within porphyrin-containing compound metabolism; protoporphyrin-IX biosynthesis; 5-aminolevulinate from L-glutamyl-tRNA(Glu): step 2/2. Its pathway is porphyrin-containing compound metabolism; chlorophyll biosynthesis. The chain is Glutamate-1-semialdehyde 2,1-aminomutase from Prochlorococcus marinus (strain MIT 9215).